A 138-amino-acid polypeptide reads, in one-letter code: Large ribosomal subunit protein mL54 (138 aa).

The N-terminal 16 residues, 1–16, are a transit peptide targeting the mitochondrion; it reads MAARRLFGATGSWARW.

It belongs to the mitochondrion-specific ribosomal protein mL54 family. As to quaternary structure, component of the mitochondrial ribosome large subunit (39S) which comprises a 16S rRNA and about 50 distinct proteins.

It is found in the mitochondrion. The sequence is that of Large ribosomal subunit protein mL54 (MRPL54) from Bos taurus (Bovine).